A 599-amino-acid polypeptide reads, in one-letter code: Adenine deaminase (599 aa).

Belongs to the metallo-dependent hydrolases superfamily. Adenine deaminase family. Mn(2+) is required as a cofactor.

The catalysed reaction is adenine + H2O + H(+) = hypoxanthine + NH4(+). The chain is Adenine deaminase from Clostridium botulinum (strain Langeland / NCTC 10281 / Type F).